Reading from the N-terminus, the 127-residue chain is Large ribosomal subunit protein uL24B (127 aa).

The protein belongs to the universal ribosomal protein uL24 family. Component of the large ribosomal subunit (LSU). Mature yeast ribosomes consist of a small (40S) and a large (60S) subunit. The 40S small subunit contains 1 molecule of ribosomal RNA (18S rRNA) and 33 different proteins (encoded by 57 genes). The large 60S subunit contains 3 rRNA molecules (25S, 5.8S and 5S rRNA) and 46 different proteins (encoded by 81 genes).

It is found in the cytoplasm. Component of the ribosome, a large ribonucleoprotein complex responsible for the synthesis of proteins in the cell. The small ribosomal subunit (SSU) binds messenger RNAs (mRNAs) and translates the encoded message by selecting cognate aminoacyl-transfer RNA (tRNA) molecules. The large subunit (LSU) contains the ribosomal catalytic site termed the peptidyl transferase center (PTC), which catalyzes the formation of peptide bonds, thereby polymerizing the amino acids delivered by tRNAs into a polypeptide chain. The nascent polypeptides leave the ribosome through a tunnel in the LSU and interact with protein factors that function in enzymatic processing, targeting, and the membrane insertion of nascent chains at the exit of the ribosomal tunnel. The protein is Large ribosomal subunit protein uL24B of Saccharomyces cerevisiae (strain ATCC 204508 / S288c) (Baker's yeast).